The primary structure comprises 378 residues: tRNA-specific 2-thiouridylase MnmA (378 aa).

ATP-binding positions include 9–16 and methionine 35; that span reads GVSGGVDS. The tract at residues 94-96 is interaction with target base in tRNA; sequence NPD. The Nucleophile role is filled by cysteine 99. A disulfide bond links cysteine 99 and cysteine 195. Residue glycine 123 coordinates ATP. Residues 145–147 are interaction with tRNA; it reads KDQ. Catalysis depends on cysteine 195, which acts as the Cysteine persulfide intermediate. Residues 307–308 form an interaction with tRNA region; that stretch reads RY.

The protein belongs to the MnmA/TRMU family.

Its subcellular location is the cytoplasm. The catalysed reaction is S-sulfanyl-L-cysteinyl-[protein] + uridine(34) in tRNA + AH2 + ATP = 2-thiouridine(34) in tRNA + L-cysteinyl-[protein] + A + AMP + diphosphate + H(+). Its function is as follows. Catalyzes the 2-thiolation of uridine at the wobble position (U34) of tRNA, leading to the formation of s(2)U34. The protein is tRNA-specific 2-thiouridylase MnmA of Xanthomonas oryzae pv. oryzae (strain MAFF 311018).